We begin with the raw amino-acid sequence, 271 residues long: Proteasome inhibitor PI31 subunit (271 aa).

The residue at position 2 (A2) is an N-acetylalanine. An important for homodimerization and interaction with FBXO7 region spans residues 2-150 (AGLEVLFASA…PIHEQWEKAR (149 aa)). S153 and S189 each carry phosphoserine. Position 205 is an omega-N-methylarginine (R205). R219 carries the post-translational modification Asymmetric dimethylarginine. Positions 226 to 271 (SGLPNRLPPGAVPPGARFDPFGPIGTSPSGPNPDHLPPPGYDDMYL) are disordered. R231 is subject to Omega-N-methylarginine. Position 252 is a phosphoserine (S252). The segment covering 255–265 (GPNPDHLPPPG) has biased composition (pro residues).

It belongs to the proteasome inhibitor PI31 family. In terms of assembly, monomer and homodimer. Interacts with FBXO7.

The protein localises to the cytoplasm. It localises to the endoplasmic reticulum. Plays an important role in control of proteasome function. Inhibits the hydrolysis of protein and peptide substrates by the 20S proteasome. Also inhibits the activation of the proteasome by the proteasome regulatory proteins PA700 and PA28. The chain is Proteasome inhibitor PI31 subunit (Psmf1) from Mus musculus (Mouse).